We begin with the raw amino-acid sequence, 428 residues long: Cholecystokinin receptor type A (428 aa).

Residues 1 to 41 (MEVADSLLGNGSDVPPPCELGLENETLVCLEQPRAAKEWQP) lie on the Extracellular side of the membrane. N-linked (GlcNAc...) asparagine glycosylation is found at Asn-10 and Asn-24. Cysteines 18 and 29 form a disulfide. Residues 42–67 (AVQILLYSLIFLLSVLGNTLVITVLI) traverse the membrane as a helical segment. Residues 68–77 (RNKRMRTVTN) lie on the Cytoplasmic side of the membrane. The helical transmembrane segment at 78–104 (IFLLSLAVSDLMLCLFCMPFNLIPNLL) threads the bilayer. The Extracellular segment spans residues 105-115 (KDFIFGSAVCK). An intrachain disulfide couples Cys-114 to Cys-196. A helical membrane pass occupies residues 116–137 (TTTYFMGTSVSVSTFNLVAISL). Residues 138 to 157 (ERYGAICKPLQSRVWQTKSH) lie on the Cytoplasmic side of the membrane. Residues 158 to 178 (ALKVIATTWCLSFTIMTPYPI) traverse the membrane as a helical segment. Topologically, residues 179–210 (YSNLVPFTKTNNQTANMCRFLLPNDVMQQSWH) are extracellular. Asn-190 carries an N-linked (GlcNAc...) asparagine glycan. Residues 211 to 234 (TFLLLILFLIPGIVMMVAYGLISL) traverse the membrane as a helical segment. Over 235–313 (ELYQGIKFDA…NLMAKKRVIR (79 aa)) the chain is Cytoplasmic. The tract at residues 250 to 269 (ARDRNPSTGSSGRYEDGDGC) is disordered. The chain crosses the membrane as a helical span at residues 314–334 (MLMVIVVLFFLCWMPIFSANA). Residues 335–349 (WRAYDTASAERRLSG) are Extracellular-facing. A helical transmembrane segment spans residues 350-373 (TPISFILLLSYTSSCVNPIIYCFM). Topologically, residues 374 to 428 (NKRFRLGFLATFPCCPHPGPPGPRGEVGEEEEGRTTGASLSRYSYSHMSASAPGP) are cytoplasmic. Cys-387 is lipidated: S-palmitoyl cysteine. The interval 393-428 (PPGPRGEVGEEEEGRTTGASLSRYSYSHMSASAPGP) is disordered. Polar residues predominate over residues 409–422 (TGASLSRYSYSHMS).

Belongs to the G-protein coupled receptor 1 family.

The protein resides in the cell membrane. Functionally, receptor for cholecystokinin. Mediates pancreatic growth and enzyme secretion, smooth muscle contraction of the gall bladder and stomach. Has a 1000-fold higher affinity for CCK rather than for gastrin. It modulates feeding and dopamine-induced behavior in the central and peripheral nervous system. This receptor mediates its action by association with G proteins that activate a phosphatidylinositol-calcium second messenger system. This Canis lupus familiaris (Dog) protein is Cholecystokinin receptor type A (CCKAR).